The sequence spans 295 residues: MPWIQIKLNATNENAELIGDMLMEETGALSVTFLDAHDTPVFEPLPGETRLWGDTDVLALYDAEADTQLIMSQIKASNMLAEGFAYKIEQLEDKDWEREWMDNFHPMKFGQRLWICPSWRDIPDPTAVNVMLDPGLAFGTGTHPTTALCLEWLEGLDLSGKTVIDFGCGSGILAIAAIKLGAEKVIGIDIDPQALLASKDNAQRNGVADQLDVYLPQDQPEGLLADVVVANILAAPLRELSSIIKGLVKPNGQLAMSGVLDTQAEDVANYYRDELHIDPIVEQSEWCRISGRKQG.

S-adenosyl-L-methionine is bound by residues Thr-146, Gly-167, Asp-189, and Asn-231.

It belongs to the methyltransferase superfamily. PrmA family.

Its subcellular location is the cytoplasm. The enzyme catalyses L-lysyl-[protein] + 3 S-adenosyl-L-methionine = N(6),N(6),N(6)-trimethyl-L-lysyl-[protein] + 3 S-adenosyl-L-homocysteine + 3 H(+). Methylates ribosomal protein L11. This chain is Ribosomal protein L11 methyltransferase, found in Vibrio vulnificus (strain YJ016).